Here is a 227-residue protein sequence, read N- to C-terminus: 2-C-methyl-D-erythritol 4-phosphate cytidylyltransferase (227 aa).

It belongs to the IspD/TarI cytidylyltransferase family. IspD subfamily.

It carries out the reaction 2-C-methyl-D-erythritol 4-phosphate + CTP + H(+) = 4-CDP-2-C-methyl-D-erythritol + diphosphate. It participates in isoprenoid biosynthesis; isopentenyl diphosphate biosynthesis via DXP pathway; isopentenyl diphosphate from 1-deoxy-D-xylulose 5-phosphate: step 2/6. Catalyzes the formation of 4-diphosphocytidyl-2-C-methyl-D-erythritol from CTP and 2-C-methyl-D-erythritol 4-phosphate (MEP). This chain is 2-C-methyl-D-erythritol 4-phosphate cytidylyltransferase, found in Dehalococcoides mccartyi (strain ATCC BAA-2266 / KCTC 15142 / 195) (Dehalococcoides ethenogenes (strain 195)).